A 260-amino-acid polypeptide reads, in one-letter code: Indole-3-glycerol phosphate synthase (260 aa).

The protein belongs to the TrpC family.

It carries out the reaction 1-(2-carboxyphenylamino)-1-deoxy-D-ribulose 5-phosphate + H(+) = (1S,2R)-1-C-(indol-3-yl)glycerol 3-phosphate + CO2 + H2O. It functions in the pathway amino-acid biosynthesis; L-tryptophan biosynthesis; L-tryptophan from chorismate: step 4/5. The protein is Indole-3-glycerol phosphate synthase of Chloroherpeton thalassium (strain ATCC 35110 / GB-78).